The sequence spans 68 residues: Metallothionein-3 (68 aa).

The residue at position 1 (Met-1) is an N-acetylmethionine. The segment at 1-30 (MDPETCPCPTGGSCTCSDPCKCEGCTCASS) is beta. 8 residues coordinate a divalent metal cation: Cys-6, Cys-8, Cys-14, Cys-16, Cys-20, Cys-22, Cys-25, and Cys-27. The tract at residues 31–68 (KKSCCSCCPAECEKCAKDCVCKGGEGAEAEEKKCSCCQ) is alpha. Ser-33 is subject to Phosphoserine. A divalent metal cation-binding residues include Cys-34, Cys-35, Cys-37, Cys-38, Cys-42, Cys-45, Cys-49, Cys-51, Cys-64, Cys-66, and Cys-67.

It belongs to the metallothionein superfamily. Type 1 family.

In terms of biological role, binds heavy metals. Contains five zinc and one copper atoms per polypeptide chain and only a negligible amount of cadmium. The protein is Metallothionein-3 (MT3) of Bos mutus grunniens (Wild yak).